The primary structure comprises 313 residues: Pyrimidine-specific ribonucleoside hydrolase RihB (313 aa).

The active-site Proton acceptor is the Asp-11. The Ca(2+) site is built by Asp-11, Asp-16, and Val-124. Substrate is bound by residues Gln-227 and His-239. Residue Asp-240 participates in Ca(2+) binding.

It belongs to the IUNH family. RihB subfamily. Homotetramer. The cofactor is Ca(2+).

It carries out the reaction a pyrimidine ribonucleoside + H2O = a pyrimidine nucleobase + D-ribose. Hydrolyzes cytidine or uridine to ribose and cytosine or uracil, respectively. Has a clear preference for cytidine over uridine. Strictly specific for ribonucleosides. The chain is Pyrimidine-specific ribonucleoside hydrolase RihB from Escherichia coli O9:H4 (strain HS).